Reading from the N-terminus, the 106-residue chain is uncharacterized protein (106 aa).

2 helical membrane-spanning segments follow: residues 25–45 (VMNV…IHYI) and 62–82 (ICFL…NFQG).

The protein localises to the membrane. This is an uncharacterized protein from Saccharomyces cerevisiae (strain ATCC 204508 / S288c) (Baker's yeast).